We begin with the raw amino-acid sequence, 391 residues long: Oxygen-dependent coproporphyrinogen-III oxidase, chloroplastic (391 aa).

Polar residues predominate over residues 1 to 13 (MASSLLTTPSQTL). The disordered stretch occupies residues 1 to 34 (MASSLLTTPSQTLAPNPAAARARRSSPAAAQVSF). The segment covering 14-30 (APNPAAARARRSSPAAA) has biased composition (low complexity). The segment at 125–134 (VLQDGNVFEK) is important for dimerization. Residue Ser179 coordinates substrate. The active-site Proton donor is His193. Substrate contacts are provided by residues 195–197 (NYR) and 349–354 (GGRIES). The interval 331-366 (YVEFNLVYDRGTTFGLKTGGRIESILVSLPLTARWE) is important for dimerization.

Belongs to the aerobic coproporphyrinogen-III oxidase family. Homodimer.

Its subcellular location is the plastid. The protein localises to the chloroplast. The enzyme catalyses coproporphyrinogen III + O2 + 2 H(+) = protoporphyrinogen IX + 2 CO2 + 2 H2O. The protein operates within porphyrin-containing compound metabolism; protoporphyrin-IX biosynthesis; protoporphyrinogen-IX from coproporphyrinogen-III (O2 route): step 1/1. Involved in the heme and chlorophyll biosynthesis. Catalyzes the aerobic oxidative decarboxylation of propionate groups of rings A and B of coproporphyrinogen-III to yield the vinyl groups in protoporphyrinogen-IX. The protein is Oxygen-dependent coproporphyrinogen-III oxidase, chloroplastic (CPX) of Hordeum vulgare (Barley).